Consider the following 159-residue polypeptide: MNPRRKKRLLVIVAVLFGIGASIGLVLYALQENINLFYTPSELVDGKGPNKEKPQIGQKLRIGGMVVPGSVERNEQSLKVSFTLVDTGPTVVVRYQGILPDLFREGQGIVAQGVLVEPNVIEAFEVLAKHDEEYMPAEVAEALKGIKHEKPKYNLDSGN.

Over 1 to 8 (MNPRRKKR) the chain is Cytoplasmic. A helical; Signal-anchor for type II membrane protein transmembrane segment spans residues 9 to 29 (LLVIVAVLFGIGASIGLVLYA). Residues 30-159 (LQENINLFYT…KPKYNLDSGN (130 aa)) are Periplasmic-facing. Residues histidine 130 and tyrosine 134 each contribute to the heme site.

It belongs to the CcmE/CycJ family.

Its subcellular location is the cell inner membrane. Its function is as follows. Heme chaperone required for the biogenesis of c-type cytochromes. Transiently binds heme delivered by CcmC and transfers the heme to apo-cytochromes in a process facilitated by CcmF and CcmH. The sequence is that of Cytochrome c-type biogenesis protein CcmE from Pseudoalteromonas translucida (strain TAC 125).